The following is an 86-amino-acid chain: Secreted transmembrane peptide 6 (86 aa).

Residues 1-31 (MGMKSPNIAAFMLPLLLILFTLSSQLKVVES) form the signal peptide. An SCOOP motif motif is present at residues 45-58 (IVYTPPSRSCGTSP). The short motif at 51 to 53 (SRS) is the SxS motif essential for MIK2 binding element.

This sequence belongs to the serine rich endogenous peptide (SCOOP) phytocytokine family. In terms of assembly, interacts with MIK2 (via extracellular leucine-rich repeat domain); this interaction triggers the formation of complex between MIK2 and the BAK1/SERK3 and SERK4 coreceptors, and subsequent BAK1 activation by phosphorylation. In terms of tissue distribution, mostly expressed in leaves, and, to a lower extent, in roots, stems, siliques, seeds and flowers.

It localises to the cell membrane. It is found in the secreted. The protein localises to the extracellular space. The protein resides in the apoplast. In terms of biological role, brassicaceae-specific phytocytokine (plant endogenous peptide released into the apoplast) perceived by MIK2 in a BAK1/SERK3 and SERK4 coreceptors-dependent manner, that modulates various physiological and antimicrobial processes including growth prevention and reactive oxygen species (ROS) response regulation. Prevents general growth and development. This is Secreted transmembrane peptide 6 from Arabidopsis thaliana (Mouse-ear cress).